Reading from the N-terminus, the 154-residue chain is Myoglobin (154 aa).

In terms of domain architecture, Globin spans 2–148 (ELSDQEWKHV…FRNDMASKYK (147 aa)). Position 65 (H65) interacts with nitrite. H65 serves as a coordination point for O2. H94 contributes to the heme b binding site.

Belongs to the globin family. In terms of assembly, monomeric.

The protein localises to the cytoplasm. It is found in the sarcoplasm. The enzyme catalyses Fe(III)-heme b-[protein] + nitric oxide + H2O = Fe(II)-heme b-[protein] + nitrite + 2 H(+). The catalysed reaction is H2O2 + AH2 = A + 2 H2O. Functionally, monomeric heme protein which primary function is to store oxygen and facilitate its diffusion within muscle tissues. Reversibly binds oxygen through a pentacoordinated heme iron and enables its timely and efficient release as needed during periods of heightened demand. Depending on the oxidative conditions of tissues and cells, and in addition to its ability to bind oxygen, it also has a nitrite reductase activity whereby it regulates the production of bioactive nitric oxide. Under stress conditions, like hypoxia and anoxia, it also protects cells against reactive oxygen species thanks to its pseudoperoxidase activity. In Alligator mississippiensis (American alligator), this protein is Myoglobin (MB).